The following is a 330-amino-acid chain: MQNFIEQIQKCENLNDLEAIRISVLGKKGILTEGFTKLKGLEDETKKEFAAKLNAQKEIFNKAYLAKFKDLENLALEERMKQDALNFNYFDESITTGALHPVMSTMDKIIEYFIALNFSIEKGPLIEDDFHNFEALNLPKSHPARDMQDTFYFDDKRLLRTQTSPVQIRTMLAQKPPIRMIAPGAVFRRDFDITHTPMFHQVEGLVVEEGQKVSFANLKSALEDFLRYMFGDVKVRFRPSFFPFTEPSAEVDISCVFCKEKGCRVCKHTGWLEVLGCGIVDPNVYNFVGYENVSGYAFGLGVERFAMLLHQIPDLRSLFEGDLRLLEQFR.

Glu-246 lines the Mg(2+) pocket.

The protein belongs to the class-II aminoacyl-tRNA synthetase family. Phe-tRNA synthetase alpha subunit type 1 subfamily. In terms of assembly, tetramer of two alpha and two beta subunits. The cofactor is Mg(2+).

The protein localises to the cytoplasm. The enzyme catalyses tRNA(Phe) + L-phenylalanine + ATP = L-phenylalanyl-tRNA(Phe) + AMP + diphosphate + H(+). This Campylobacter jejuni subsp. doylei (strain ATCC BAA-1458 / RM4099 / 269.97) protein is Phenylalanine--tRNA ligase alpha subunit.